Consider the following 75-residue polypeptide: uncharacterized protein (75 aa).

This is an uncharacterized protein from Halalkalibacterium halodurans (strain ATCC BAA-125 / DSM 18197 / FERM 7344 / JCM 9153 / C-125) (Bacillus halodurans).